A 300-amino-acid chain; its full sequence is Bifunctional protein FolD 2 (300 aa).

NADP(+)-binding positions include 165-167 (GRS), Ser-190, and Ile-231.

It belongs to the tetrahydrofolate dehydrogenase/cyclohydrolase family. As to quaternary structure, homodimer.

It catalyses the reaction (6R)-5,10-methylene-5,6,7,8-tetrahydrofolate + NADP(+) = (6R)-5,10-methenyltetrahydrofolate + NADPH. The enzyme catalyses (6R)-5,10-methenyltetrahydrofolate + H2O = (6R)-10-formyltetrahydrofolate + H(+). It functions in the pathway one-carbon metabolism; tetrahydrofolate interconversion. Catalyzes the oxidation of 5,10-methylenetetrahydrofolate to 5,10-methenyltetrahydrofolate and then the hydrolysis of 5,10-methenyltetrahydrofolate to 10-formyltetrahydrofolate. The protein is Bifunctional protein FolD 2 of Pseudomonas syringae pv. tomato (strain ATCC BAA-871 / DC3000).